The primary structure comprises 133 residues: Nodulation protein K (133 aa).

The chain is Nodulation protein K (nodK) from Bradyrhizobium elkanii.